We begin with the raw amino-acid sequence, 257 residues long: GTP cyclohydrolase FolE2 (257 aa).

The protein belongs to the GTP cyclohydrolase IV family.

It catalyses the reaction GTP + H2O = 7,8-dihydroneopterin 3'-triphosphate + formate + H(+). The protein operates within cofactor biosynthesis; 7,8-dihydroneopterin triphosphate biosynthesis; 7,8-dihydroneopterin triphosphate from GTP: step 1/1. In terms of biological role, converts GTP to 7,8-dihydroneopterin triphosphate. In Dictyoglomus turgidum (strain DSM 6724 / Z-1310), this protein is GTP cyclohydrolase FolE2.